Here is a 57-residue protein sequence, read N- to C-terminus: MAVPKRRTSKTRKNKRRTHFKISVPGMTECPSCGEYKLSHRVCKNCGSYNGEEVVSK.

The protein belongs to the bacterial ribosomal protein bL32 family.

The chain is Large ribosomal subunit protein bL32 from Staphylococcus haemolyticus (strain JCSC1435).